The primary structure comprises 527 residues: ATP synthase subunit alpha (527 aa).

169 to 176 (GDRQTGKT) contributes to the ATP binding site.

This sequence belongs to the ATPase alpha/beta chains family. As to quaternary structure, F-type ATPases have 2 components, CF(1) - the catalytic core - and CF(0) - the membrane proton channel. CF(1) has five subunits: alpha(3), beta(3), gamma(1), delta(1), epsilon(1). CF(0) has three main subunits: a(1), b(2) and c(9-12). The alpha and beta chains form an alternating ring which encloses part of the gamma chain. CF(1) is attached to CF(0) by a central stalk formed by the gamma and epsilon chains, while a peripheral stalk is formed by the delta and b chains.

The protein resides in the cell membrane. It catalyses the reaction ATP + H2O + 4 H(+)(in) = ADP + phosphate + 5 H(+)(out). In terms of biological role, produces ATP from ADP in the presence of a proton gradient across the membrane. The alpha chain is a regulatory subunit. This Metamycoplasma arthritidis (strain 158L3-1) (Mycoplasma arthritidis) protein is ATP synthase subunit alpha.